The sequence spans 34 residues: MSDIN-like toxin proprotein 2 (34 aa).

The propeptide occupies 1 to 10 (MSDINTARLP). A cross-link (cyclopeptide (Phe-Pro)) is located at residues 11–20 (FYQFPDFKYP). Positions 21–34 (CVGDDIEMVLARGE) are excised as a propeptide.

It belongs to the MSDIN fungal toxin family. In terms of processing, processed by the macrocyclase-peptidase enzyme POPB to yield a toxic cyclic decapeptide. POPB first removes 10 residues from the N-terminus. Conformational trapping of the remaining peptide forces the enzyme to release this intermediate rather than proceed to macrocyclization. The enzyme rebinds the remaining peptide in a different conformation and catalyzes macrocyclization of the N-terminal 10 residues.

In terms of biological role, probable toxin that belongs to the MSDIN-like toxin family responsible for a large number of food poisoning cases and deaths. In Amanita bisporigera (Destroying angel), this protein is MSDIN-like toxin proprotein 2.